Here is a 531-residue protein sequence, read N- to C-terminus: L-aspartate oxidase (531 aa).

FAD contacts are provided by residues Ser11–Ala14, Lys33, Asn40–Gly47, Thr151–Ala152, and Asp205. The active-site Proton donor/acceptor is the Arg272. FAD contacts are provided by residues Glu353 and Ser369 to Leu370.

It belongs to the FAD-dependent oxidoreductase 2 family. NadB subfamily. As to quaternary structure, monomer. Homodimer. The cofactor is FAD.

It is found in the cytoplasm. The enzyme catalyses L-aspartate + O2 = iminosuccinate + H2O2. The catalysed reaction is fumarate + L-aspartate = iminosuccinate + succinate. It functions in the pathway cofactor biosynthesis; NAD(+) biosynthesis; iminoaspartate from L-aspartate (oxidase route): step 1/1. In terms of biological role, catalyzes the oxidation of L-aspartate to iminoaspartate, the first step in the de novo biosynthesis of NAD(+). Can use either oxygen or fumarate as electron acceptors, which allows the enzyme to be functional under aerobic and anaerobic conditions. The sequence is that of L-aspartate oxidase from Bacillus subtilis (strain 168).